The primary structure comprises 428 residues: Flotillin-2 (428 aa).

S-palmitoyl cysteine attachment occurs at residues Cys-4, Cys-19, and Cys-20.

The protein belongs to the band 7/mec-2 family. Flotillin subfamily. In terms of assembly, heterooligomeric complex of flotillins 1 and 2. Palmitoylation may be required for the formation of higher order complexes and for neurite outgrowth in cultured neural stem cells. As to expression, normally expressed in growing retinal exons of newly differentiated ganglion cells at the retinal margin. After optic nerve injury, expressed in all retinal ganglion cells and retinal axons. Also expressed in endothelial cells, spinal cord, larval and adult skin, muscle processes, thymus and gill macrophages.

The protein localises to the membrane. It localises to the endosome. Its function is as follows. May play a role in axon growth and regeneration. May be involved in epidermal cell adhesion and epidermal structure and function. In Carassius auratus (Goldfish), this protein is Flotillin-2 (flot2).